Consider the following 470-residue polypeptide: Sulfate adenylyltransferase subunit 1 (470 aa).

The 217-residue stretch at 22 to 238 (KELLRFITCG…ETIKIDYAYT (217 aa)) folds into the tr-type G domain. The tract at residues 31–38 (GSVDDGKS) is G1. Residue 31–38 (GSVDDGKS) participates in GTP binding. The interval 89-93 (GITID) is G2. A G3 region spans residues 110–113 (DTPG). Residues 110 to 114 (DTPGH) and 165 to 168 (NKMD) each bind GTP. The tract at residues 165–168 (NKMD) is G4. The interval 202–204 (SAL) is G5.

This sequence belongs to the TRAFAC class translation factor GTPase superfamily. Classic translation factor GTPase family. CysN/NodQ subfamily. In terms of assembly, heterodimer composed of CysD, the smaller subunit, and CysN.

The enzyme catalyses sulfate + ATP + H(+) = adenosine 5'-phosphosulfate + diphosphate. It functions in the pathway sulfur metabolism; hydrogen sulfide biosynthesis; sulfite from sulfate: step 1/3. Functionally, with CysD forms the ATP sulfurylase (ATPS) that catalyzes the adenylation of sulfate producing adenosine 5'-phosphosulfate (APS) and diphosphate, the first enzymatic step in sulfur assimilation pathway. APS synthesis involves the formation of a high-energy phosphoric-sulfuric acid anhydride bond driven by GTP hydrolysis by CysN coupled to ATP hydrolysis by CysD. The protein is Sulfate adenylyltransferase subunit 1 of Francisella tularensis subsp. tularensis (strain SCHU S4 / Schu 4).